The primary structure comprises 487 residues: UDP-N-acetylmuramate--L-alanine ligase (487 aa).

Residue 130–136 (GTHGKTT) coordinates ATP.

Belongs to the MurCDEF family.

The protein resides in the cytoplasm. It catalyses the reaction UDP-N-acetyl-alpha-D-muramate + L-alanine + ATP = UDP-N-acetyl-alpha-D-muramoyl-L-alanine + ADP + phosphate + H(+). Its pathway is cell wall biogenesis; peptidoglycan biosynthesis. Cell wall formation. The polypeptide is UDP-N-acetylmuramate--L-alanine ligase (Photobacterium profundum (strain SS9)).